Consider the following 546-residue polypeptide: DDB1- and CUL4-associated factor 11 (546 aa).

Over residues M1–G10 the composition is skewed to polar residues. A disordered region spans residues M1–V40. A phosphoserine mark is found at S73 and S75. The segment at H79–D100 is disordered. Positions D80–D89 are enriched in basic and acidic residues. WD repeat units follow at residues T170–K210, D216–D258, E263–Q302, S305–P345, G353–G392, G435–T480, and T481–D520. A disordered region spans residues D521–Q546. Residues H537–Q546 show a composition bias toward polar residues.

Interacts with DDB1 and CUL4A.

It functions in the pathway protein modification; protein ubiquitination. May function as a substrate receptor for CUL4-DDB1 E3 ubiquitin-protein ligase complex. The chain is DDB1- and CUL4-associated factor 11 (DCAF11) from Bos taurus (Bovine).